The sequence spans 71 residues: Antitoxin VapB26 (71 aa).

Antitoxin component of a type II toxin-antitoxin (TA) system. Upon expression in M.smegmatis neutralizes the effect of cognate toxin VapC26. The chain is Antitoxin VapB26 (vapB26) from Mycobacterium tuberculosis (strain ATCC 25618 / H37Rv).